The sequence spans 249 residues: 5'-nucleotidase SurE (249 aa).

Asp-8, Asp-9, Ser-39, and Asn-91 together coordinate a divalent metal cation.

Belongs to the SurE nucleotidase family. It depends on a divalent metal cation as a cofactor.

It localises to the cytoplasm. The enzyme catalyses a ribonucleoside 5'-phosphate + H2O = a ribonucleoside + phosphate. In terms of biological role, nucleotidase that shows phosphatase activity on nucleoside 5'-monophosphates. This chain is 5'-nucleotidase SurE, found in Haemophilus influenzae (strain PittEE).